Here is a 400-residue protein sequence, read N- to C-terminus: uncharacterized protein (400 aa).

It belongs to the mimivirus R640 family.

The protein localises to the virion. This is an uncharacterized protein from Acanthamoeba polyphaga (Amoeba).